We begin with the raw amino-acid sequence, 283 residues long: N-terminal Xaa-Pro-Lys N-methyltransferase 2 (283 aa).

Residues glycine 124, arginine 129, aspartate 146, 174 to 175 (LQ), and glutamine 190 contribute to the S-adenosyl-L-methionine site.

It belongs to the methyltransferase superfamily. NTM1 family.

Its subcellular location is the nucleus. It catalyses the reaction N-terminal L-alanyl-L-prolyl-L-lysyl-[protein] + S-adenosyl-L-methionine = N-terminal N-methyl-L-alanyl-L-prolyl-L-lysyl-[protein] + S-adenosyl-L-homocysteine + H(+). The catalysed reaction is N-terminal L-prolyl-L-prolyl-L-lysyl-[protein] + S-adenosyl-L-methionine = N-terminal N-methyl-L-prolyl-L-prolyl-L-lysyl-[protein] + S-adenosyl-L-homocysteine + H(+). The enzyme catalyses N-terminal L-seryl-L-prolyl-L-lysyl-[protein] + S-adenosyl-L-methionine = N-terminal N-methyl-L-seryl-L-prolyl-L-lysyl-[protein] + S-adenosyl-L-homocysteine + H(+). Functionally, alpha N-methyltransferase that methylates the N-terminus of target proteins containing the N-terminal motif [Ala/Pro/Ser]-Pro-Lys when the initiator Met is cleaved. Specifically catalyzes monomethylation of exposed alpha-amino group of Ala or Ser residue in the [Ala/Ser]-Pro-Lys motif and Pro in the Pro-Pro-Lys motif. Predominantly functions as a mono-methyltransferase but is also able to di-/tri-methylate the GPKRIA peptide and di-methylate the PPKRIA peptide (in vitro). May activate NTMT1 by priming its substrates for trimethylation. In Rattus norvegicus (Rat), this protein is N-terminal Xaa-Pro-Lys N-methyltransferase 2 (Ntmt2).